The sequence spans 214 residues: MSKSQLTSVFFILLCALSPIYGAFEYMQLVLTWPITFCRIKHCERTPTNFTIHGLWPDNHTTMLNYCDRSKPYNMFTDGKKKNDLDERWPDLTKTKFDSLDKQAFWKDEYVKHGTCCSDKFDREQYFDLAMTLRDKFDLLSSLRNHGISRGFSYTVQNLNNTIKAITGGFPNLTCSRLRELKEIGICFDETVKNVIDCPNPKTCKPTNKGVMFP.

The first 22 residues, 1–22 (MSKSQLTSVFFILLCALSPIYG), serve as a signal peptide directing secretion. The cysteines at positions 38 and 43 are disulfide-linked. An N-linked (GlcNAc...) asparagine glycan is attached at Asn-49. The active-site Proton donor is His-53. His-53 contributes to the RNA binding site. Asn-59 carries N-linked (GlcNAc...) asparagine glycosylation. An intrachain disulfide couples Cys-67 to Cys-116. Residues 91–92 (DL), Lys-94, and Phe-105 contribute to the RNA site. Glu-109 is an active-site residue. Residue 112–113 (KH) coordinates RNA. The active-site Proton acceptor is the His-113. Asn-160 is a glycosylation site (N-linked (GlcNAc...) asparagine). Cystine bridges form between Cys-175/Cys-204 and Cys-187/Cys-198.

Belongs to the RNase T2 family.

The protein localises to the secreted. It localises to the extracellular space. It catalyses the reaction a ribonucleotidyl-ribonucleotide-RNA + H2O = a 3'-end 3'-phospho-ribonucleotide-RNA + a 5'-end dephospho-ribonucleoside-RNA + H(+). In terms of biological role, self-incompatibility (SI) is the inherited ability of a flowering plant to prevent self-fertilization by discriminating between self and non-self pollen during pollination. In many species of the Solanaceae, self-incompatibility is controlled by the single, multiallelic locus S. This stylar glycoprotein is associated with expression of self-incompatibility in potato. The sequence is that of Ribonuclease S-2 (S-2) from Nicotiana alata (Winged tobacco).